A 63-amino-acid chain; its full sequence is MPVPKRKTSPSRRGKRRSHDGLRPENVIVNKTTGEFQRSHHVSLDGFYNGRRVLSPKGKAGSS.

Residues 1–18 (MPVPKRKTSPSRRGKRRS) show a composition bias toward basic residues. A disordered region spans residues 1 to 26 (MPVPKRKTSPSRRGKRRSHDGLRPEN).

It belongs to the bacterial ribosomal protein bL32 family.

This Neorickettsia sennetsu (strain ATCC VR-367 / Miyayama) (Ehrlichia sennetsu) protein is Large ribosomal subunit protein bL32.